The sequence spans 233 residues: Orotidine 5'-phosphate decarboxylase (233 aa).

Residues Asp-13, Lys-35, 62-71, Thr-122, Arg-182, Gln-191, Gly-211, and Arg-212 contribute to the substrate site; that span reads DLKFHDIPNT. Lys-64 serves as the catalytic Proton donor.

The protein belongs to the OMP decarboxylase family. Type 1 subfamily. In terms of assembly, homodimer.

It catalyses the reaction orotidine 5'-phosphate + H(+) = UMP + CO2. The protein operates within pyrimidine metabolism; UMP biosynthesis via de novo pathway; UMP from orotate: step 2/2. Catalyzes the decarboxylation of orotidine 5'-monophosphate (OMP) to uridine 5'-monophosphate (UMP). This is Orotidine 5'-phosphate decarboxylase from Pseudomonas putida (strain ATCC 47054 / DSM 6125 / CFBP 8728 / NCIMB 11950 / KT2440).